The chain runs to 545 residues: Ubiquitin carboxyl-terminal hydrolase 17-like protein D (545 aa).

Residues 51 to 348 (CGLQNTGNSC…NAYVLFYVQQ (298 aa)) enclose the USP domain. The active-site Nucleophile is Cys-60. The active-site Proton acceptor is His-307. Disordered regions lie at residues 367 to 443 (LDPE…KLGQ) and 521 to 545 (RQEG…LLVR). Residues 374 to 385 (KKSRRKKHKKKS) show a composition bias toward basic residues. The span at 393 to 404 (EPSKNREKKATK) shows a compositional bias: basic and acidic residues. Positions 524-537 (GRRRSKKGKNKNKQ) are enriched in basic residues.

Belongs to the peptidase C19 family. USP17 subfamily. Detected in T-cell, myeloid, and embryonic stem cell lines.

The protein resides in the nucleus. It localises to the endoplasmic reticulum. The catalysed reaction is Thiol-dependent hydrolysis of ester, thioester, amide, peptide and isopeptide bonds formed by the C-terminal Gly of ubiquitin (a 76-residue protein attached to proteins as an intracellular targeting signal).. Functionally, deubiquitinating enzyme that removes conjugated ubiquitin from specific proteins to regulate different cellular processes that may include cell proliferation, progression through the cell cycle, apoptosis, cell migration, and the cellular response to viral infection. The polypeptide is Ubiquitin carboxyl-terminal hydrolase 17-like protein D (Mus musculus (Mouse)).